The following is a 73-amino-acid chain: U-scoloptoxin(22)-Cw1a (73 aa).

The signal sequence occupies residues 1-24 (MRRFVFLAFVLVLFVIANLDSSSA).

It belongs to the scoloptoxin-22 family. Post-translationally, contains 1 disulfide bond. Expressed by the venom gland.

The protein resides in the secreted. This chain is U-scoloptoxin(22)-Cw1a, found in Cormocephalus westwoodi (Westwood's green centipede).